The chain runs to 351 residues: Anaerobic nitrite reductase Glb1-2 (351 aa).

2 consecutive Globin domains span residues 13-162 and 184-333; these read DFTE…VEMK and CFTE…AEMK. Positions 56, 70, 74, 104, 108, 109, 227, 241, 245, 275, 279, and 280 each coordinate heme b. Residues 331–351 are disordered; that stretch reads EMKKTDHDHQTNVEDKSKPSS.

The protein belongs to the plant globin family. As to quaternary structure, monomer. It depends on heme b as a cofactor. In terms of tissue distribution, predominantly expressed in nodules and roots, and, to a lesser extent, in leaves, at low levels in pods, but barely in stems, petioles, buds and flowers. Mainly expressed in nodules and roots at low levels, and barely in leaves. As to expression, expressed at very low levels in nodules, roots and pods.

Its subcellular location is the cytoplasm. It is found in the nucleus. It carries out the reaction Fe(III)-heme b-[protein] + nitric oxide + H2O = Fe(II)-heme b-[protein] + nitrite + 2 H(+). Functionally, phytoglobin that regulates the fine tuning of nitric oxide (NO) concentration in the cytosol in response to sudden changes in O(2) availability, and performs both symbiotic and nonsymbiotic functions. Exhibits NO dioxygenase activity in the presence of O(2) but nitrite reductase (NiR) activity in the absence of O(2) (e.g. during flooding or in waterlogged soil). May not function as an oxygen storage or transport protein. Extremely reactive toward the physiological ligands O(2), nitric oxide (NO), and nitrite with a very high affinity for O(2) through an hexacoordinate heme iron because of a very low dissociation constant. Its function is as follows. Very high affinity for O(2) through two hexacoordinate heme irons. Extremely reactive toward the physiological ligands O(2), nitric oxide (NO), and nitrite. Very high affinity for O(2) through a single hexacoordinate heme iron. Extremely reactive toward the physiological ligands O(2), nitric oxide (NO), and nitrite. The polypeptide is Anaerobic nitrite reductase Glb1-2 (Medicago truncatula (Barrel medic)).